Here is a 205-residue protein sequence, read N- to C-terminus: COP9 signalosome complex subunit 7 (205 aa).

The PCI domain occupies 1–135 (MEEKISQAID…QTLHVSWALE (135 aa)). S183 carries the post-translational modification Phosphoserine.

It belongs to the CSN7/EIF3M family. CSN7 subfamily. In terms of assembly, component of the COP9 signalosome (CSN) complex.

Its function is as follows. Component of the COP9 signalosome (CSN) complex that acts as an regulator of the ubiquitin (Ubl) conjugation pathway by mediating the deneddylation of the cullin subunit of SCF-type E3 ubiquitin-protein ligase complexes. This chain is COP9 signalosome complex subunit 7 (csn71), found in Schizosaccharomyces pombe (strain 972 / ATCC 24843) (Fission yeast).